We begin with the raw amino-acid sequence, 104 residues long: Flagellar hook-basal body complex protein FliE (104 aa).

Belongs to the FliE family.

The protein localises to the bacterial flagellum basal body. This is Flagellar hook-basal body complex protein FliE from Salmonella typhi.